The chain runs to 53 residues: IgW transmembrane form Tm1T3/Tm6T3/Tm3C4 (53 aa).

The tract at residues 1–25 is disordered; it reads VQAVPPDVKGEEGKEEVEDMDGDDN. Acidic residues predominate over residues 13 to 24; the sequence is GKEEVEDMDGDD. A helical membrane pass occupies residues 29 to 49; sequence VAAFAILFILSFLYSTFVTVV.

In terms of tissue distribution, expressed in the spleen, pancreas, peripheral blood lymphocytes and at low levels in the epigonal organ.

It is found in the membrane. The sequence is that of IgW transmembrane form Tm1T3/Tm6T3/Tm3C4 from Ginglymostoma cirratum (Nurse shark).